The primary structure comprises 430 residues: Enolase (430 aa).

Gln-163 lines the (2R)-2-phosphoglycerate pocket. Catalysis depends on Glu-205, which acts as the Proton donor. Positions 242, 287, and 314 each coordinate Mg(2+). (2R)-2-phosphoglycerate contacts are provided by Lys-339, Arg-368, Ser-369, and Lys-390. Lys-339 serves as the catalytic Proton acceptor.

Belongs to the enolase family. Mg(2+) is required as a cofactor.

It is found in the cytoplasm. Its subcellular location is the secreted. The protein resides in the cell surface. It catalyses the reaction (2R)-2-phosphoglycerate = phosphoenolpyruvate + H2O. It participates in carbohydrate degradation; glycolysis; pyruvate from D-glyceraldehyde 3-phosphate: step 4/5. In terms of biological role, catalyzes the reversible conversion of 2-phosphoglycerate (2-PG) into phosphoenolpyruvate (PEP). It is essential for the degradation of carbohydrates via glycolysis. The polypeptide is Enolase (Bacillus cytotoxicus (strain DSM 22905 / CIP 110041 / 391-98 / NVH 391-98)).